The primary structure comprises 212 residues: Noggin-2 (212 aa).

A signal peptide spans 1–23; that stretch reads MGSITRALPLLLLLLLCAHGTAS. The disordered stretch occupies residues 37 to 56; that stretch reads LPVPDLIENPDPEHDPREQD. The segment covering 47–56 has biased composition (basic and acidic residues); the sequence is DPEHDPREQD. N-linked (GlcNAc...) asparagine glycosylation occurs at asparagine 84.

This sequence belongs to the noggin family. In terms of assembly, homodimer; disulfide-linked.

The protein localises to the secreted. Inhibitor of bone morphogenetic proteins (BMP) signaling. The chain is Noggin-2 (nog2) from Danio rerio (Zebrafish).